The chain runs to 633 residues: DNA topoisomerase 4 subunit B (633 aa).

Residues Tyr5, Asn45, Asp72, 113-119, and Lys337 each bind ATP; that span reads GLHGVGA. In terms of domain architecture, Toprim spans 419–534; sequence KELFIVEGDS…LGHVYLALPP (116 aa). Mg(2+) contacts are provided by Glu425, Asp499, and Asp501.

This sequence belongs to the type II topoisomerase family. ParE type 2 subfamily. In terms of assembly, heterotetramer composed of ParC and ParE. Requires Mg(2+) as cofactor. Mn(2+) is required as a cofactor. Ca(2+) serves as cofactor.

The catalysed reaction is ATP-dependent breakage, passage and rejoining of double-stranded DNA.. Topoisomerase IV is essential for chromosome segregation. It relaxes supercoiled DNA. Performs the decatenation events required during the replication of a circular DNA molecule. The chain is DNA topoisomerase 4 subunit B from Mycoplasma genitalium (strain ATCC 33530 / DSM 19775 / NCTC 10195 / G37) (Mycoplasmoides genitalium).